Here is a 500-residue protein sequence, read N- to C-terminus: L-arabinose isomerase (500 aa).

Mn(2+) contacts are provided by E306, E333, H350, and H450.

The protein belongs to the arabinose isomerase family. Homohexamer. The cofactor is Mn(2+).

It carries out the reaction beta-L-arabinopyranose = L-ribulose. Its pathway is carbohydrate degradation; L-arabinose degradation via L-ribulose; D-xylulose 5-phosphate from L-arabinose (bacterial route): step 1/3. Catalyzes the conversion of L-arabinose to L-ribulose. This is L-arabinose isomerase from Salmonella choleraesuis (strain SC-B67).